Here is a 157-residue protein sequence, read N- to C-terminus: Protein Smg homolog (157 aa).

Belongs to the Smg family.

The protein is Protein Smg homolog of Aeromonas hydrophila subsp. hydrophila (strain ATCC 7966 / DSM 30187 / BCRC 13018 / CCUG 14551 / JCM 1027 / KCTC 2358 / NCIMB 9240 / NCTC 8049).